Consider the following 54-residue polypeptide: Large ribosomal subunit protein bL33 (54 aa).

The protein belongs to the bacterial ribosomal protein bL33 family.

The protein is Large ribosomal subunit protein bL33 of Corynebacterium urealyticum (strain ATCC 43042 / DSM 7109).